Here is a 105-residue protein sequence, read N- to C-terminus: Large ribosomal subunit protein uL24 (105 aa).

This sequence belongs to the universal ribosomal protein uL24 family. In terms of assembly, part of the 50S ribosomal subunit.

Functionally, one of two assembly initiator proteins, it binds directly to the 5'-end of the 23S rRNA, where it nucleates assembly of the 50S subunit. One of the proteins that surrounds the polypeptide exit tunnel on the outside of the subunit. The protein is Large ribosomal subunit protein uL24 of Mycolicibacterium smegmatis (strain ATCC 700084 / mc(2)155) (Mycobacterium smegmatis).